The sequence spans 216 residues: MLLDYIKSRRGAIGIGTLIIFIALVLVAAVAAAVIINTAANLQHKAARVGEESTRQVASGIQVLKITGYAVNTKNITKLAILVSPNVGDEIDLSSTIVTISNGDYKASLVYGGQITYVNTNGTRDIFNESWPNIANPTTEFGVIVLQDADGSMNNTEHPTMNFGDKAIIAINVGDVFGGIMPRERIYGEVIPEFGASGIIEFRAPSTFSEHVVTLQ.

Positions 1–11 are excised as a propeptide; that stretch reads MLLDYIKSRRG.

This sequence belongs to the archaeal flagellin family.

The protein resides in the archaeal flagellum. Functionally, flagellin is the subunit protein which polymerizes to form the filaments of archaeal flagella. The polypeptide is Flagellin B3 (flaB3) (Methanocaldococcus jannaschii (strain ATCC 43067 / DSM 2661 / JAL-1 / JCM 10045 / NBRC 100440) (Methanococcus jannaschii)).